A 377-amino-acid polypeptide reads, in one-letter code: tRNA-specific 2-thiouridylase MnmA (377 aa).

Residues 12 to 19 (GMSGGVDS) and methionine 38 contribute to the ATP site. Positions 98–100 (NPD) are interaction with target base in tRNA. The active-site Nucleophile is cysteine 103. The cysteines at positions 103 and 200 are disulfide-linked. Glycine 127 is an ATP binding site. An interaction with tRNA region spans residues 150–152 (KDQ). The Cysteine persulfide intermediate role is filled by cysteine 200. The segment at 314 to 315 (RY) is interaction with tRNA.

The protein belongs to the MnmA/TRMU family.

The protein resides in the cytoplasm. The enzyme catalyses S-sulfanyl-L-cysteinyl-[protein] + uridine(34) in tRNA + AH2 + ATP = 2-thiouridine(34) in tRNA + L-cysteinyl-[protein] + A + AMP + diphosphate + H(+). In terms of biological role, catalyzes the 2-thiolation of uridine at the wobble position (U34) of tRNA, leading to the formation of s(2)U34. The polypeptide is tRNA-specific 2-thiouridylase MnmA (Limosilactobacillus reuteri (strain DSM 20016) (Lactobacillus reuteri)).